Reading from the N-terminus, the 179-residue chain is Large ribosomal subunit protein uL5 (179 aa).

The protein belongs to the universal ribosomal protein uL5 family. In terms of assembly, part of the 50S ribosomal subunit; part of the 5S rRNA/L5/L18/L25 subcomplex. Contacts the 5S rRNA and the P site tRNA. Forms a bridge to the 30S subunit in the 70S ribosome.

This is one of the proteins that bind and probably mediate the attachment of the 5S RNA into the large ribosomal subunit, where it forms part of the central protuberance. In the 70S ribosome it contacts protein S13 of the 30S subunit (bridge B1b), connecting the 2 subunits; this bridge is implicated in subunit movement. Contacts the P site tRNA; the 5S rRNA and some of its associated proteins might help stabilize positioning of ribosome-bound tRNAs. This chain is Large ribosomal subunit protein uL5, found in Buchnera aphidicola subsp. Acyrthosiphon kondoi (Acyrthosiphon kondoi symbiotic bacterium).